The primary structure comprises 159 residues: MGKITDRVEDLAQPIVESQGLELVDVEYVKEGENRVLRVFIENPEGEVTLDHCENVSKNLDEKLDEVDPIQESYILEVSSPGIERPLKKKEDFDRFSGKLAYIKTFAPVSGNKEITGIIKGRDGDNIKVLKKDDDKELEIPFSQIAKAHLMVDFDNITG.

The protein belongs to the RimP family.

It localises to the cytoplasm. Required for maturation of 30S ribosomal subunits. The sequence is that of Ribosome maturation factor RimP from Halothermothrix orenii (strain H 168 / OCM 544 / DSM 9562).